Consider the following 317-residue polypeptide: Transaldolase (317 aa).

The Schiff-base intermediate with substrate role is filled by K132.

Belongs to the transaldolase family. Type 1 subfamily. In terms of assembly, homodimer.

The protein resides in the cytoplasm. The catalysed reaction is D-sedoheptulose 7-phosphate + D-glyceraldehyde 3-phosphate = D-erythrose 4-phosphate + beta-D-fructose 6-phosphate. It functions in the pathway carbohydrate degradation; pentose phosphate pathway; D-glyceraldehyde 3-phosphate and beta-D-fructose 6-phosphate from D-ribose 5-phosphate and D-xylulose 5-phosphate (non-oxidative stage): step 2/3. Transaldolase is important for the balance of metabolites in the pentose-phosphate pathway. In Yersinia pseudotuberculosis serotype O:1b (strain IP 31758), this protein is Transaldolase.